A 263-amino-acid chain; its full sequence is tRNA pseudouridine synthase A (263 aa).

Residue aspartate 73 is the Nucleophile of the active site. Tyrosine 131 lines the substrate pocket.

Belongs to the tRNA pseudouridine synthase TruA family. As to quaternary structure, homodimer.

It carries out the reaction uridine(38/39/40) in tRNA = pseudouridine(38/39/40) in tRNA. Functionally, formation of pseudouridine at positions 38, 39 and 40 in the anticodon stem and loop of transfer RNAs. This Mycoplasmoides gallisepticum (strain R(low / passage 15 / clone 2)) (Mycoplasma gallisepticum) protein is tRNA pseudouridine synthase A.